The sequence spans 507 residues: Histidine ammonia-lyase (507 aa).

The segment at residues 142 to 144 (ASG) is a cross-link (5-imidazolinone (Ala-Gly)). Residue S143 is modified to 2,3-didehydroalanine (Ser).

It belongs to the PAL/histidase family. Post-translationally, contains an active site 4-methylidene-imidazol-5-one (MIO), which is formed autocatalytically by cyclization and dehydration of residues Ala-Ser-Gly.

It localises to the cytoplasm. It carries out the reaction L-histidine = trans-urocanate + NH4(+). It functions in the pathway amino-acid degradation; L-histidine degradation into L-glutamate; N-formimidoyl-L-glutamate from L-histidine: step 1/3. The polypeptide is Histidine ammonia-lyase (Maricaulis maris (strain MCS10) (Caulobacter maris)).